A 257-amino-acid chain; its full sequence is Hydroxyacylglutathione hydrolase (257 aa).

Zn(2+)-binding residues include H54, H56, D58, H59, H113, D137, and H175.

It belongs to the metallo-beta-lactamase superfamily. Glyoxalase II family. In terms of assembly, monomer. It depends on Zn(2+) as a cofactor.

The catalysed reaction is an S-(2-hydroxyacyl)glutathione + H2O = a 2-hydroxy carboxylate + glutathione + H(+). It functions in the pathway secondary metabolite metabolism; methylglyoxal degradation; (R)-lactate from methylglyoxal: step 2/2. In terms of biological role, thiolesterase that catalyzes the hydrolysis of S-D-lactoyl-glutathione to form glutathione and D-lactic acid. This chain is Hydroxyacylglutathione hydrolase, found in Nostoc sp. (strain PCC 7120 / SAG 25.82 / UTEX 2576).